A 344-amino-acid polypeptide reads, in one-letter code: Acireductone dioxygenase (344 aa).

The Fe(2+) site is built by histidine 92, histidine 94, glutamate 98, and histidine 137. Ni(2+) contacts are provided by histidine 92, histidine 94, glutamate 98, and histidine 137.

It belongs to the acireductone dioxygenase (ARD) family. It depends on Fe(2+) as a cofactor. Requires Ni(2+) as cofactor.

The protein resides in the cytoplasm. It is found in the nucleus. The catalysed reaction is 1,2-dihydroxy-5-(methylsulfanyl)pent-1-en-3-one + O2 = 4-methylsulfanyl-2-oxobutanoate + formate + 2 H(+). It catalyses the reaction 1,2-dihydroxy-5-(methylsulfanyl)pent-1-en-3-one + O2 = 3-(methylsulfanyl)propanoate + CO + formate + 2 H(+). It participates in amino-acid biosynthesis; L-methionine biosynthesis via salvage pathway; L-methionine from S-methyl-5-thio-alpha-D-ribose 1-phosphate: step 5/6. Functionally, catalyzes 2 different reactions between oxygen and the acireductone 1,2-dihydroxy-3-keto-5-methylthiopentene (DHK-MTPene) depending upon the metal bound in the active site. Fe-containing acireductone dioxygenase (Fe-ARD) produces formate and 2-keto-4-methylthiobutyrate (KMTB), the alpha-ketoacid precursor of methionine in the methionine recycle pathway. Ni-containing acireductone dioxygenase (Ni-ARD) produces methylthiopropionate, carbon monoxide and formate, and does not lie on the methionine recycle pathway. The chain is Acireductone dioxygenase from Leishmania major.